The chain runs to 410 residues: Diguanylate cyclase DgcM (410 aa).

PAS domains are found at residues 3–70 and 129–198; these read THNF…NQHD and GFYA…HLPG. The PAC domain occupies 199–251; it reads GHKPLNFIHKLADGSTRHVQTYAGPIEIYGDKLMLCIVHDITEQKRLEEQLEH. The 128-residue stretch at 283-410 folds into the GGDEF domain; that stretch reads QDYSLLLIDT…NDGRNRVLAA (128 aa). D291 lines the Mg(2+) pocket. Residues N299, H304, and D308 each coordinate substrate. E334 lines the Mg(2+) pocket. E334 (proton acceptor) is an active-site residue.

Mg(2+) is required as a cofactor.

The catalysed reaction is 2 GTP = 3',3'-c-di-GMP + 2 diphosphate. It functions in the pathway purine metabolism; 3',5'-cyclic di-GMP biosynthesis. Its function is as follows. Part of a signaling cascade that regulates curli biosynthesis. The cascade is composed of two cyclic-di-GMP (c-di-GMP) control modules, in which c-di-GMP controlled by the DgcE/PdeH pair (module I) regulates the activity of the DgcM/PdeR pair (module II), which in turn regulates activity of the transcription factor MlrA and expression of the master biofilm regulator csgD. This chain is Diguanylate cyclase DgcM, found in Escherichia coli O157:H7.